The sequence spans 107 residues: Probable 4-amino-4-deoxy-L-arabinose-phosphoundecaprenol flippase subunit ArnE (107 aa).

Residues 31–105 (RVWGWLALSL…IIVGIILLGG (75 aa)) form the EamA domain. A run of 3 helical transmembrane segments spans residues 34–54 (GWLALSLVLLGCAMLLWLFVL), 57–77 (VPVSVAYPMLSLNFIFITLAA), and 85–105 (IALRHGVGVLLIIVGIILLGG).

The protein belongs to the ArnE family. In terms of assembly, heterodimer of ArnE and ArnF.

The protein resides in the cell inner membrane. The protein operates within bacterial outer membrane biogenesis; lipopolysaccharide biosynthesis. Translocates 4-amino-4-deoxy-L-arabinose-phosphoundecaprenol (alpha-L-Ara4N-phosphoundecaprenol) from the cytoplasmic to the periplasmic side of the inner membrane. This is Probable 4-amino-4-deoxy-L-arabinose-phosphoundecaprenol flippase subunit ArnE from Enterobacter sp. (strain 638).